The following is a 663-amino-acid chain: Forkhead protein sep1 (663 aa).

A DNA-binding region (fork-head) is located at residues 128-222 (KPPYSYAMLI…LKLKLRKPGV (95 aa)). 2 disordered regions span residues 220-241 (PGVN…KYGS) and 325-387 (SPLQ…DVET). A compositionally biased stretch (low complexity) spans 340–355 (SPASSASPSESLRNES). Ser-446 carries the phosphoserine modification.

Its subcellular location is the nucleus. Functionally, required for promoter sequence element PCB-driven, M-phase-specific transcription. Acts as a transcriptional activator with a role in the regulation of mitosis. Regulates septation and the periodic transcription of cdc15. The polypeptide is Forkhead protein sep1 (sep1) (Schizosaccharomyces pombe (strain 972 / ATCC 24843) (Fission yeast)).